Consider the following 423-residue polypeptide: Imidazolonepropionase (423 aa).

The Fe(3+) site is built by His-87 and His-89. The Zn(2+) site is built by His-87 and His-89. 4-imidazolone-5-propanoate is bound by residues Arg-96, Tyr-159, and His-192. Residue Tyr-159 participates in N-formimidoyl-L-glutamate binding. A Fe(3+)-binding site is contributed by His-257. His-257 contacts Zn(2+). Glu-260 provides a ligand contact to 4-imidazolone-5-propanoate. Fe(3+) is bound at residue Asp-331. Asp-331 contacts Zn(2+). Residues Asn-333 and Gly-335 each coordinate N-formimidoyl-L-glutamate. Ser-336 serves as a coordination point for 4-imidazolone-5-propanoate.

Belongs to the metallo-dependent hydrolases superfamily. HutI family. Zn(2+) serves as cofactor. Fe(3+) is required as a cofactor.

The protein resides in the cytoplasm. It catalyses the reaction 4-imidazolone-5-propanoate + H2O = N-formimidoyl-L-glutamate. It functions in the pathway amino-acid degradation; L-histidine degradation into L-glutamate; N-formimidoyl-L-glutamate from L-histidine: step 3/3. Functionally, catalyzes the hydrolytic cleavage of the carbon-nitrogen bond in imidazolone-5-propanoate to yield N-formimidoyl-L-glutamate. It is the third step in the universal histidine degradation pathway. The sequence is that of Imidazolonepropionase from Porphyromonas gingivalis (strain ATCC 33277 / DSM 20709 / CIP 103683 / JCM 12257 / NCTC 11834 / 2561).